A 293-amino-acid chain; its full sequence is tRNA-cytidine(32) 2-sulfurtransferase (293 aa).

Positions 71–76 (SGGKDS) match the PP-loop motif motif. Residues Cys146, Cys149, and Cys237 each contribute to the [4Fe-4S] cluster site.

Belongs to the TtcA family. As to quaternary structure, homodimer. Requires Mg(2+) as cofactor. The cofactor is [4Fe-4S] cluster.

Its subcellular location is the cytoplasm. It carries out the reaction cytidine(32) in tRNA + S-sulfanyl-L-cysteinyl-[cysteine desulfurase] + AH2 + ATP = 2-thiocytidine(32) in tRNA + L-cysteinyl-[cysteine desulfurase] + A + AMP + diphosphate + H(+). It functions in the pathway tRNA modification. Its function is as follows. Catalyzes the ATP-dependent 2-thiolation of cytidine in position 32 of tRNA, to form 2-thiocytidine (s(2)C32). The sulfur atoms are provided by the cysteine/cysteine desulfurase (IscS) system. This chain is tRNA-cytidine(32) 2-sulfurtransferase, found in Sinorhizobium medicae (strain WSM419) (Ensifer medicae).